A 304-amino-acid chain; its full sequence is Acetylglutamate kinase (304 aa).

Residues 64-65 (GG), R86, and N181 each bind substrate.

Belongs to the acetylglutamate kinase family. ArgB subfamily.

It localises to the plastid. The protein resides in the chloroplast. The enzyme catalyses N-acetyl-L-glutamate + ATP = N-acetyl-L-glutamyl 5-phosphate + ADP. The protein operates within amino-acid biosynthesis; L-arginine biosynthesis; N(2)-acetyl-L-ornithine from L-glutamate: step 2/4. In terms of biological role, catalyzes the ATP-dependent phosphorylation of N-acetyl-L-glutamate. The polypeptide is Acetylglutamate kinase (Cyanidium caldarium (Red alga)).